Consider the following 73-residue polypeptide: MPKIYRIKGKIVGKDEPMVFTKEYKAMKEEDAIEKIYSEIGSKHNVKRASIKIIEVSEISADEVQDPILQAVL.

The protein belongs to the eukaryotic ribosomal protein eL20 family. In terms of assembly, part of the 50S ribosomal subunit. Binds 23S rRNA.

In Methanococcus aeolicus (strain ATCC BAA-1280 / DSM 17508 / OCM 812 / Nankai-3), this protein is Large ribosomal subunit protein eL20.